The primary structure comprises 448 residues: tRNA(Ile)-lysidine synthase (448 aa).

25–30 is an ATP binding site; that stretch reads SGGSDS.

Belongs to the tRNA(Ile)-lysidine synthase family.

The protein localises to the cytoplasm. It carries out the reaction cytidine(34) in tRNA(Ile2) + L-lysine + ATP = lysidine(34) in tRNA(Ile2) + AMP + diphosphate + H(+). Its function is as follows. Ligates lysine onto the cytidine present at position 34 of the AUA codon-specific tRNA(Ile) that contains the anticodon CAU, in an ATP-dependent manner. Cytidine is converted to lysidine, thus changing the amino acid specificity of the tRNA from methionine to isoleucine. This Brucella suis biovar 1 (strain 1330) protein is tRNA(Ile)-lysidine synthase.